The following is a 77-amino-acid chain: DNA-directed RNA polymerase subunit omega (77 aa).

It belongs to the RNA polymerase subunit omega family. As to quaternary structure, in cyanobacteria the RNAP catalytic core is composed of 2 alpha, 1 beta, 1 beta', 1 gamma and 1 omega subunit. When a sigma factor is associated with the core the holoenzyme is formed, which can initiate transcription.

It catalyses the reaction RNA(n) + a ribonucleoside 5'-triphosphate = RNA(n+1) + diphosphate. In terms of biological role, promotes RNA polymerase assembly. Latches the N- and C-terminal regions of the beta' subunit thereby facilitating its interaction with the beta and alpha subunits. This Thermosynechococcus vestitus (strain NIES-2133 / IAM M-273 / BP-1) protein is DNA-directed RNA polymerase subunit omega.